The primary structure comprises 542 residues: Chitinase 1 (542 aa).

Residues 68-506 enclose the GH18 domain; that stretch reads FNVLCYFTDW…NAAHEGLKRR (439 aa). Chitin contacts are provided by residues 186-187 and 213-216; these read QE and GGWS. Glu256 (proton donor) is an active-site residue. Chitin-binding positions include Tyr257, 323–326, and Trp486; that span reads MTYD.

This sequence belongs to the glycosyl hydrolase 18 family. Semipurified toxin complex consists of at least YenA1-YenA2-YenB-YenC1-YenC2-Chi1-Chi2. The Yen-TC:K9 subcomplex is about 26 nm tall and 22 nm in diameter with 5-fold symmetry and 5 copies of YenA1, YenA2, Chi1 and Chi2; the chitinase subunits may be solvent accessible on the exterior the complex. The Yen-TC:K9 subcomplex has no insecticidal activity. The native complex with additional YenB, YenC1 and YenC2 subunits is 16 nm taller and is insecticidal; the toxicity-conferring subunits are present at about 1 copy each.

The protein localises to the secreted. The catalysed reaction is Random endo-hydrolysis of N-acetyl-beta-D-glucosaminide (1-&gt;4)-beta-linkages in chitin and chitodextrins.. Its activity is regulated as follows. Toxin complex is secreted when grown at 25 degrees Celsius or less; at higher temperatures the proteins are present intracellularly but not secreted. In terms of biological role, part of an orally active toxin complex (TC) with strong insecticidal effects on larvae of the Coleoptera Costelytra zealandica, Acrossidius tasmania and Adoryphorus couloni and some Lepidoptera larvae. The TC has an endochitinase activity. This subunit might aid infection by degradation of the larval peritrophic membrane. This chain is Chitinase 1, found in Yersinia entomophaga.